Reading from the N-terminus, the 181-residue chain is Oligoribonuclease (181 aa).

An Exonuclease domain is found at 8–171 (LIWIDLEMTG…QDIQESIAEL (164 aa)). Residue Tyr-129 is part of the active site.

This sequence belongs to the oligoribonuclease family.

The protein resides in the cytoplasm. Its function is as follows. 3'-to-5' exoribonuclease specific for small oligoribonucleotides. The chain is Oligoribonuclease from Shewanella sp. (strain ANA-3).